The primary structure comprises 314 residues: Ribosomal protein L11 methyltransferase (314 aa).

S-adenosyl-L-methionine-binding residues include threonine 161, glycine 182, aspartate 204, and asparagine 248.

It belongs to the methyltransferase superfamily. PrmA family.

Its subcellular location is the cytoplasm. The enzyme catalyses L-lysyl-[protein] + 3 S-adenosyl-L-methionine = N(6),N(6),N(6)-trimethyl-L-lysyl-[protein] + 3 S-adenosyl-L-homocysteine + 3 H(+). Its function is as follows. Methylates ribosomal protein L11. The polypeptide is Ribosomal protein L11 methyltransferase (Listeria monocytogenes serotype 4a (strain HCC23)).